The sequence spans 341 residues: NADH-ubiquinone oxidoreductase chain 2 (341 aa).

A run of 10 helical transmembrane segments spans residues 8-28 (ILFT…NSWL), 61-81 (FLTQ…LMLA), 95-115 (MIIM…FWFP), 121-141 (LTWM…LMLI), 146-166 (IKNL…IGGL), 174-194 (LMAF…MISE), 195-215 (SIWL…TFMF), 238-258 (FSLF…GFLP), 273-293 (FLLT…LRIC), and 321-341 (LIMT…FFML).

It belongs to the complex I subunit 2 family.

It localises to the mitochondrion inner membrane. It catalyses the reaction a ubiquinone + NADH + 5 H(+)(in) = a ubiquinol + NAD(+) + 4 H(+)(out). Its function is as follows. Core subunit of the mitochondrial membrane respiratory chain NADH dehydrogenase (Complex I) that is believed to belong to the minimal assembly required for catalysis. Complex I functions in the transfer of electrons from NADH to the respiratory chain. The immediate electron acceptor for the enzyme is believed to be ubiquinone. This Drosophila yakuba (Fruit fly) protein is NADH-ubiquinone oxidoreductase chain 2 (mt:ND2).